The sequence spans 447 residues: Dirigent protein 10 (447 aa).

A signal peptide spans 1–21; the sequence is MAGQKILSLLVIALVVTFAAA. The segment covering 74 to 85 has biased composition (gly residues); sequence SGSTGSGLGAGT. The interval 74–123 is disordered; sequence SGSTGSGLGAGTGSIPSSGSGPGLLPTASSVPGSLAGGGSGSLPTTGSAT. Low complexity predominate over residues 86–107; that stretch reads GSIPSSGSGPGLLPTASSVPGS.

The protein belongs to the plant dirigent protein family. Homodimer. In roots, mostly detected in root endodermis and quiescent center, and, to a lower extent, in root stele and cortex. Expressed in root vascular cylinder, flowers, siliques, cotyledon and leaf veins, and leaf margins. Present in the basal region of rosette leaf trichomes and in developing xylem.

The protein resides in the secreted. It is found in the extracellular space. Its subcellular location is the apoplast. Its function is as follows. Dirigent proteins impart stereoselectivity on the phenoxy radical-coupling reaction, yielding optically active lignans from two molecules of coniferyl alcohol in the biosynthesis of lignans, flavonolignans, and alkaloids and thus plays a central role in plant secondary metabolism. Regulates suberin accumulation in roots. The chain is Dirigent protein 10 (DIR10) from Arabidopsis thaliana (Mouse-ear cress).